The chain runs to 405 residues: Phosphoglycerate kinase (405 aa).

Substrate contacts are provided by residues 24–26, R40, 63–66, R122, and R162; these read DFN and HLGR. ATP-binding positions include K212, E331, and 361–364; that span reads GGDS.

It belongs to the phosphoglycerate kinase family. As to quaternary structure, monomer.

It is found in the cytoplasm. It carries out the reaction (2R)-3-phosphoglycerate + ATP = (2R)-3-phospho-glyceroyl phosphate + ADP. The protein operates within carbohydrate degradation; glycolysis; pyruvate from D-glyceraldehyde 3-phosphate: step 2/5. This chain is Phosphoglycerate kinase (pgk), found in Corynebacterium glutamicum (strain ATCC 13032 / DSM 20300 / JCM 1318 / BCRC 11384 / CCUG 27702 / LMG 3730 / NBRC 12168 / NCIMB 10025 / NRRL B-2784 / 534).